We begin with the raw amino-acid sequence, 265 residues long: H-2 class II histocompatibility antigen, A-D beta chain (265 aa).

The signal sequence occupies residues 1–27 (MALQIPSLLLSAAVVVLMVLSSPRTEG). The beta-1 stretch occupies residues 28–122 (GNSERHFVVQ…PETSTSLRRL (95 aa)). Residues 28-226 (GNSERHFVVQ…RAQSESARSK (199 aa)) are Extracellular-facing. Disulfide bonds link Cys42/Cys106 and Cys145/Cys201. Asn46 carries an N-linked (GlcNAc...) asparagine glycan. The segment at 123 to 216 (EQPNVAISLS…SLKSPITVEW (94 aa)) is beta-2. The region spanning 125–213 (PNVAISLSRT…EHPSLKSPIT (89 aa)) is the Ig-like C1-type domain. The interval 217–226 (RAQSESARSK) is connecting peptide. The chain crosses the membrane as a helical span at residues 227-247 (MLSGIGGCVLGVIFLGLGLFI). At 248–265 (RHRSQKGPRGPPPAGLLQ) the chain is on the cytoplasmic side.

It belongs to the MHC class II family. Post-translationally, ubiquitinated in immature dendritic cells leading to down-regulation of MHC class II.

Its subcellular location is the membrane. This is H-2 class II histocompatibility antigen, A-D beta chain (H2-Ab1) from Mus musculus (Mouse).